A 438-amino-acid chain; its full sequence is Anaerobic glycerol-3-phosphate dehydrogenase subunit B (438 aa).

It belongs to the anaerobic G-3-P dehydrogenase subunit B family. Composed of a catalytic GlpA/B dimer and of membrane bound GlpC. It depends on FMN as a cofactor.

It carries out the reaction a quinone + sn-glycerol 3-phosphate = dihydroxyacetone phosphate + a quinol. Its pathway is polyol metabolism; glycerol degradation via glycerol kinase pathway; glycerone phosphate from sn-glycerol 3-phosphate (anaerobic route): step 1/1. In terms of biological role, conversion of glycerol 3-phosphate to dihydroxyacetone. Uses fumarate or nitrate as electron acceptor. This is Anaerobic glycerol-3-phosphate dehydrogenase subunit B from Vibrio vulnificus (strain CMCP6).